The following is a 128-amino-acid chain: Large ribosomal subunit protein bL12 (128 aa).

The protein belongs to the bacterial ribosomal protein bL12 family. Homodimer. Part of the ribosomal stalk of the 50S ribosomal subunit. Forms a multimeric L10(L12)X complex, where L10 forms an elongated spine to which 2 to 4 L12 dimers bind in a sequential fashion. Binds GTP-bound translation factors.

Functionally, forms part of the ribosomal stalk which helps the ribosome interact with GTP-bound translation factors. Is thus essential for accurate translation. The sequence is that of Large ribosomal subunit protein bL12 from Kineococcus radiotolerans (strain ATCC BAA-149 / DSM 14245 / SRS30216).